A 294-amino-acid chain; its full sequence is 33 kDa chaperonin (294 aa).

2 disulfide bridges follow: Cys231–Cys233 and Cys264–Cys267.

It belongs to the HSP33 family. Post-translationally, under oxidizing conditions two disulfide bonds are formed involving the reactive cysteines. Under reducing conditions zinc is bound to the reactive cysteines and the protein is inactive.

The protein resides in the cytoplasm. Its function is as follows. Redox regulated molecular chaperone. Protects both thermally unfolding and oxidatively damaged proteins from irreversible aggregation. Plays an important role in the bacterial defense system toward oxidative stress. The chain is 33 kDa chaperonin from Aeromonas salmonicida (strain A449).